A 127-amino-acid polypeptide reads, in one-letter code: Protein ApaG (127 aa).

Positions 3–127 constitute an ApaG domain; that stretch reads NNPSSKIEVA…FVLSVPRTLH (125 aa).

The sequence is that of Protein ApaG from Xylella fastidiosa (strain M23).